A 260-amino-acid polypeptide reads, in one-letter code: Phosphatidate cytidylyltransferase (260 aa).

Helical transmembrane passes span 9–29 (IIALLIFLPILLKGGLILMLF), 46–66 (MIKFLSIPGLISALALIIIML), 70–90 (AGEWVQVIQLKGLIAMSFIVL), 102–122 (FMDAAFCLMSVAYVGIGFMYF), 130–150 (LRYILFAFLIVWLTDTGAYIF), 172–192 (FFGGILCSILVPLVMQMFVDL), and 196–216 (IWLLLLVTIVLSMFGQLGDLV).

Belongs to the CDS family.

Its subcellular location is the cell membrane. It carries out the reaction a 1,2-diacyl-sn-glycero-3-phosphate + CTP + H(+) = a CDP-1,2-diacyl-sn-glycerol + diphosphate. Its pathway is phospholipid metabolism; CDP-diacylglycerol biosynthesis; CDP-diacylglycerol from sn-glycerol 3-phosphate: step 3/3. This Staphylococcus epidermidis (strain ATCC 35984 / DSM 28319 / BCRC 17069 / CCUG 31568 / BM 3577 / RP62A) protein is Phosphatidate cytidylyltransferase (cdsA).